A 651-amino-acid polypeptide reads, in one-letter code: Polyadenylate-binding protein 1 (651 aa).

Positions 1–27 are enriched in low complexity; it reads MSSTESPVPAAAAPAEAVPASTPAPAA. Residues 1 to 42 form a disordered region; that stretch reads MSSTESPVPAAAAPAEAVPASTPAPAAEQPAVGNGEQRNNAD. 4 consecutive RRM domains span residues 47–125, 135–211, 227–304, and 330–407; these read TSLY…WSQR, GNIF…HHIP, TNVY…RAQK, and VNLY…LAQR. 2 disordered regions span residues 481-554 and 632-651; these read QPGQ…EADQ and QNDSAGAEAEANAEAPKTEA. The segment covering 529–540 has biased composition (pro residues); it reads AGQPVPGQPMPR. Positions 555-632 constitute a PABC domain; sequence PGALTAAALA…ALEVLKEYQQ (78 aa). Residues 636–651 show a composition bias toward low complexity; that stretch reads AGAEAEANAEAPKTEA.

The protein belongs to the polyadenylate-binding protein type-1 family. As to quaternary structure, part of large ribonucleoprotein complexes (mRNPs) containing RNA-binding proteins RRM4 and PAB1, endosome-binding protein UPA1, core scaffold protein UPA2 and associated factor GRP1. Interacts (via PABC domain) with UPA1 (via PAM2 domain). Interacts (via PABC domain) with UPA2 (via PAM2 domains).

Its subcellular location is the cytoplasm. The protein resides in the cytoskeleton. It is found in the endosome. Its function is as follows. RNA-binding protein involved in the formation of polar-growing hyphae which is essential for infection by the plant pathogen. Component of endosomal mRNA transport that regulates polarity of the infectious hyphae by transporting a broad spectrum of cargo mRNAs from the nucleus to cell poles. This is Polyadenylate-binding protein 1 from Mycosarcoma maydis (Corn smut fungus).